A 438-amino-acid polypeptide reads, in one-letter code: 23S rRNA (uracil(1939)-C(5))-methyltransferase RlmD (438 aa).

In terms of domain architecture, TRAM spans 9-68 (RRTVNRHIITVTADNLDAQGQGVARHQGKTIFVAGLLPGEQAQVQLTEEKRQFAKAKLVK). Positions 81, 87, 90, and 168 each coordinate [4Fe-4S] cluster. Q272, F301, N306, E322, N349, and D370 together coordinate S-adenosyl-L-methionine. Catalysis depends on C396, which acts as the Nucleophile.

This sequence belongs to the class I-like SAM-binding methyltransferase superfamily. RNA M5U methyltransferase family. RlmD subfamily.

The catalysed reaction is uridine(1939) in 23S rRNA + S-adenosyl-L-methionine = 5-methyluridine(1939) in 23S rRNA + S-adenosyl-L-homocysteine + H(+). In terms of biological role, catalyzes the formation of 5-methyl-uridine at position 1939 (m5U1939) in 23S rRNA. This is 23S rRNA (uracil(1939)-C(5))-methyltransferase RlmD from Photorhabdus laumondii subsp. laumondii (strain DSM 15139 / CIP 105565 / TT01) (Photorhabdus luminescens subsp. laumondii).